A 177-amino-acid chain; its full sequence is SAALAGTITLGASLGFQILDKVLGELGKVSRKIAVGVDNESGGSWTALNAYFRSGTTDVILPEFVPNQKALLYSGRKDTGPVATGAVAAFAYYMSNGHTLGVMFSVPFDYNLYSNWWDVKIYSGKRRADQAMYEDMYYGNPYRGDNGWHQKNLGYGLKMKGIMTSAVEAILEIRISR.

Residues 3–12 (ALAGTITLGA) form a plays an important role in the hemolytic activity region. Residues 11–30 (GASLGFQILDKVLGELGKVS) form an N-terminal region region. Serine 54, valine 87, serine 105, proline 107, tyrosine 133, tyrosine 137, and tyrosine 138 together coordinate phosphocholine. The segment at 105-120 (SVPFDYNLYSNWWDVK) is trp-rich region, which is important for the binding to lipid membrane.

Belongs to the actinoporin family. Sea anemone subfamily. In terms of assembly, octamer or nonamer in membranes. Monomer in the soluble state.

It is found in the secreted. The protein localises to the nematocyst. Its subcellular location is the target cell membrane. Pore-forming protein that forms cations-selective hydrophilic pores of around 1 nm and causes cardiac stimulation and cytolysis. Pore formation is a multi-step process that involves specific recognition of membrane sphingomyelin (but neither cholesterol nor phosphatidylcholine) using aromatic rich region and adjacent phosphocholine (POC) binding site, firm binding to the membrane (mainly driven by hydrophobic interactions) accompanied by the transfer of the N-terminal region to the lipid-water interface and finally pore formation after oligomerization of monomers. Cytolytic effects include red blood cells hemolysis, platelet aggregation and lysis, cytotoxic and cytostatic effects on fibroblasts. Lethality in mammals has been ascribed to severe vasospasm of coronary vessels, cardiac arrhythmia, and inotropic effects. Preincubation with exogenous sphingomyeline causes complete loss of hemolytic activity. The protein is DELTA-stichotoxin-Hcr4b of Radianthus crispa (Leathery sea anemone).